The following is a 548-amino-acid chain: T-complex protein 1 subunit theta (548 aa).

N-acetylalanine is present on Ala-2. Tyr-47 and Gly-48 together coordinate ADP. Asp-99 contributes to the Mg(2+) binding site. ADP contacts are provided by Gly-100, Thr-101, Asn-102, Phe-103, Met-169, Ser-170, Lys-171, Gly-412, and Asp-499. Residues Gly-100, Thr-101, and Asn-102 each contribute to the ATP site. 5 residues coordinate ATP: Ser-170, Lys-171, Gly-412, Asp-499, and Lys-504. Residue Tyr-505 is modified to Phosphotyrosine. The disordered stretch occupies residues 529–548 (PAGGPKPPSGKKDWDEDQND).

Component of the chaperonin-containing T-complex (TRiC), a hexadecamer composed of two identical back-to-back stacked rings enclosing a protein folding chamber. Each ring is made up of eight different subunits: TCP1/CCT1, CCT2, CCT3, CCT4, CCT5, CCT6A/CCT6, CCT7, CCT8.

The protein localises to the cytoplasm. It is found in the cytoskeleton. The protein resides in the microtubule organizing center. Its subcellular location is the centrosome. It localises to the cilium basal body. The enzyme catalyses ATP + H2O = ADP + phosphate + H(+). Component of the chaperonin-containing T-complex (TRiC), a molecular chaperone complex that assists the folding of actin, tubulin and other proteins upon ATP hydrolysis. This chain is T-complex protein 1 subunit theta, found in Gallus gallus (Chicken).